A 269-amino-acid polypeptide reads, in one-letter code: Shikimate dehydrogenase (NADP(+)) (269 aa).

Shikimate is bound by residues 13 to 15 (SLS) and threonine 60. Residue lysine 64 is the Proton acceptor of the active site. Glutamate 76 serves as a coordination point for NADP(+). The shikimate site is built by asparagine 85 and aspartate 100. NADP(+)-binding positions include 124-128 (GAGGA), 148-153 (NRTMSR), and isoleucine 209. Tyrosine 211 contacts shikimate. Glycine 232 serves as a coordination point for NADP(+). Glutamine 239 serves as a coordination point for shikimate.

This sequence belongs to the shikimate dehydrogenase family. Monomer or homodimer.

It carries out the reaction shikimate + NADP(+) = 3-dehydroshikimate + NADPH + H(+). Its pathway is metabolic intermediate biosynthesis; chorismate biosynthesis; chorismate from D-erythrose 4-phosphate and phosphoenolpyruvate: step 4/7. Functionally, involved in the biosynthesis of the chorismate, which leads to the biosynthesis of aromatic amino acids. Catalyzes the reversible NADPH linked reduction of 3-dehydroshikimate (DHSA) to yield shikimate (SA). It can also use NAD to oxidize shikimate. This chain is Shikimate dehydrogenase (NADP(+)), found in Staphylococcus epidermidis (strain ATCC 35984 / DSM 28319 / BCRC 17069 / CCUG 31568 / BM 3577 / RP62A).